The following is a 222-amino-acid chain: Pro-opiomelanocortin-1 (222 aa).

The signal sequence occupies residues 1 to 28; that stretch reads MVRGERMLCPAWLLALAVLCAAGSEVRA. Positions 29 to 105 are excised as a propeptide; sequence QCMEDARCRD…DPESSPQHEH (77 aa).

It belongs to the POMC family. Post-translationally, specific enzymatic cleavages at paired basic residues yield the different active peptides.

It localises to the secreted. Its function is as follows. Stimulates the adrenal glands to release cortisol. Functionally, anorexigenic peptide. Increases the pigmentation of skin by increasing melanin production in melanocytes. In terms of biological role, increases the pigmentation of skin by increasing melanin production in melanocytes. Endogenous orexigenic opiate. Its function is as follows. Endogenous opiate. The chain is Pro-opiomelanocortin-1 (pomca) from Cyprinus carpio (Common carp).